Here is a 95-residue protein sequence, read N- to C-terminus: MAKEELIEMDGVVTDVLPDSRFKVQLDNGHEVMAYSAGKMKKHRIRIMVGDRVDMEMTPYDLTKARITYRHKVGGPPGPVTGGGNRPPPRQPRRR.

The region spanning M1–K72 is the S1-like domain. Positions R70 to R95 are disordered. The segment covering R86–R95 has biased composition (pro residues).

The protein belongs to the IF-1 family. In terms of assembly, component of the 30S ribosomal translation pre-initiation complex which assembles on the 30S ribosome in the order IF-2 and IF-3, IF-1 and N-formylmethionyl-tRNA(fMet); mRNA recruitment can occur at any time during PIC assembly.

It localises to the cytoplasm. Functionally, one of the essential components for the initiation of protein synthesis. Stabilizes the binding of IF-2 and IF-3 on the 30S subunit to which N-formylmethionyl-tRNA(fMet) subsequently binds. Helps modulate mRNA selection, yielding the 30S pre-initiation complex (PIC). Upon addition of the 50S ribosomal subunit IF-1, IF-2 and IF-3 are released leaving the mature 70S translation initiation complex. This Rhodospirillum rubrum (strain ATCC 11170 / ATH 1.1.1 / DSM 467 / LMG 4362 / NCIMB 8255 / S1) protein is Translation initiation factor IF-1.